The chain runs to 269 residues: Sororin (269 aa).

Disordered regions lie at residues 1–39 (MSEGKKRSRGGLAIISPPKRRSQRKSTSDSPIPEPIMKR), 56–110 (VNTG…PKIN), and 146–169 (SLNSSSSLYSPTRKTDSSDTSTPN). Polar residues predominate over residues 57 to 66 (NTGSQSTPKV). Residues 85–87 (KEN) carry the KEN box motif. Residues 146 to 155 (SLNSSSSLYS) show a composition bias toward low complexity. An FGF motif motif is present at residues 180–182 (FGF). The segment at 247–269 (LDEWAAFMNAEFEEAEKFDLTVE) is C-terminal Sororin domain.

It belongs to the sororin family. In terms of assembly, interacts with the APC/C complex. Interacts with the chromatin-bound cohesin complex; the interaction is indirect, occurs after DNA replication and requires acetylation of the cohesin component smc3. Interacts (via the FGF motif) with pds5a and pds5b; the interaction is direct and prevents the interaction of pds5a with wapl. Post-translationally, ubiquitinated by the APC/C complex in G1, leading to its degradation.

Its subcellular location is the nucleus. The protein localises to the chromosome. It localises to the cytoplasm. Regulator of sister chromatid cohesion in mitosis stabilizing cohesin complex association with chromatin. May antagonize the action of wapl which stimulates cohesin dissociation from chromatin. Cohesion ensures that chromosome partitioning is accurate in both meiotic and mitotic cells and plays an important role in DNA repair. Required for efficient DNA double-stranded break repair. In Xenopus laevis (African clawed frog), this protein is Sororin (cdca5-a).